Reading from the N-terminus, the 104-residue chain is ATP-dependent Clp protease adapter protein ClpS (104 aa).

Belongs to the ClpS family. Binds to the N-terminal domain of the chaperone ClpA.

Involved in the modulation of the specificity of the ClpAP-mediated ATP-dependent protein degradation. The chain is ATP-dependent Clp protease adapter protein ClpS from Oleidesulfovibrio alaskensis (strain ATCC BAA-1058 / DSM 17464 / G20) (Desulfovibrio alaskensis).